A 199-amino-acid polypeptide reads, in one-letter code: dITP/XTP pyrophosphatase (199 aa).

8–13 (SGNAGK) lines the substrate pocket. The active-site Proton acceptor is D69. D69 contributes to the Mg(2+) binding site. Residues S70, 154–157 (FGYN), K177, and 182–183 (HR) contribute to the substrate site.

Belongs to the HAM1 NTPase family. Homodimer. Requires Mg(2+) as cofactor.

The enzyme catalyses XTP + H2O = XMP + diphosphate + H(+). It carries out the reaction dITP + H2O = dIMP + diphosphate + H(+). The catalysed reaction is ITP + H2O = IMP + diphosphate + H(+). In terms of biological role, pyrophosphatase that catalyzes the hydrolysis of nucleoside triphosphates to their monophosphate derivatives, with a high preference for the non-canonical purine nucleotides XTP (xanthosine triphosphate), dITP (deoxyinosine triphosphate) and ITP. Seems to function as a house-cleaning enzyme that removes non-canonical purine nucleotides from the nucleotide pool, thus preventing their incorporation into DNA/RNA and avoiding chromosomal lesions. This chain is dITP/XTP pyrophosphatase, found in Xanthomonas axonopodis pv. citri (strain 306).